The chain runs to 439 residues: Argininosuccinate lyase (439 aa).

The protein belongs to the lyase 1 family. Argininosuccinate lyase subfamily.

It is found in the cytoplasm. It catalyses the reaction 2-(N(omega)-L-arginino)succinate = fumarate + L-arginine. Its pathway is amino-acid biosynthesis; L-arginine biosynthesis; L-arginine from L-ornithine and carbamoyl phosphate: step 3/3. This chain is Argininosuccinate lyase, found in Caldanaerobacter subterraneus subsp. tengcongensis (strain DSM 15242 / JCM 11007 / NBRC 100824 / MB4) (Thermoanaerobacter tengcongensis).